Here is a 210-residue protein sequence, read N- to C-terminus: Leucyl/phenylalanyl-tRNA--protein transferase (210 aa).

It belongs to the L/F-transferase family.

The protein resides in the cytoplasm. The catalysed reaction is N-terminal L-lysyl-[protein] + L-leucyl-tRNA(Leu) = N-terminal L-leucyl-L-lysyl-[protein] + tRNA(Leu) + H(+). It carries out the reaction N-terminal L-arginyl-[protein] + L-leucyl-tRNA(Leu) = N-terminal L-leucyl-L-arginyl-[protein] + tRNA(Leu) + H(+). It catalyses the reaction L-phenylalanyl-tRNA(Phe) + an N-terminal L-alpha-aminoacyl-[protein] = an N-terminal L-phenylalanyl-L-alpha-aminoacyl-[protein] + tRNA(Phe). Functionally, functions in the N-end rule pathway of protein degradation where it conjugates Leu, Phe and, less efficiently, Met from aminoacyl-tRNAs to the N-termini of proteins containing an N-terminal arginine or lysine. The protein is Leucyl/phenylalanyl-tRNA--protein transferase of Deinococcus radiodurans (strain ATCC 13939 / DSM 20539 / JCM 16871 / CCUG 27074 / LMG 4051 / NBRC 15346 / NCIMB 9279 / VKM B-1422 / R1).